A 209-amino-acid chain; its full sequence is Octanoyltransferase (209 aa).

The 180-residue stretch at 30-209 (DNEPEIVYLV…IQTEFNKIFK (180 aa)) folds into the BPL/LPL catalytic domain. Substrate is bound by residues 69–76 (RGGKFTFH), 143–145 (AIG), and 156–158 (GVA). Cys174 functions as the Acyl-thioester intermediate in the catalytic mechanism.

It belongs to the LipB family.

Its subcellular location is the cytoplasm. It carries out the reaction octanoyl-[ACP] + L-lysyl-[protein] = N(6)-octanoyl-L-lysyl-[protein] + holo-[ACP] + H(+). Its pathway is protein modification; protein lipoylation via endogenous pathway; protein N(6)-(lipoyl)lysine from octanoyl-[acyl-carrier-protein]: step 1/2. Catalyzes the transfer of endogenously produced octanoic acid from octanoyl-acyl-carrier-protein onto the lipoyl domains of lipoate-dependent enzymes. Lipoyl-ACP can also act as a substrate although octanoyl-ACP is likely to be the physiological substrate. The sequence is that of Octanoyltransferase from Rickettsia felis (strain ATCC VR-1525 / URRWXCal2) (Rickettsia azadi).